The chain runs to 198 residues: Recombination protein RecR (198 aa).

The segment at 57–72 (CSVCGHITENDPCYIC) adopts a C4-type zinc-finger fold. The Toprim domain occupies 80–175 (SVICVVEDDK…KVTRLAQGLS (96 aa)).

This sequence belongs to the RecR family.

May play a role in DNA repair. It seems to be involved in an RecBC-independent recombinational process of DNA repair. It may act with RecF and RecO. This Staphylococcus haemolyticus (strain JCSC1435) protein is Recombination protein RecR.